The following is a 69-amino-acid chain: MAVPKKRTSKSKTRIRKAIWKNKANKSALRAFSLAKSILTNRSKSFYYTINDKLLNSSKSISTSKLDES.

Belongs to the bacterial ribosomal protein bL32 family.

The protein localises to the plastid. It localises to the chloroplast. The polypeptide is Large ribosomal subunit protein bL32c (rpl32) (Marchantia polymorpha (Common liverwort)).